A 179-amino-acid polypeptide reads, in one-letter code: Large ribosomal subunit protein uL6 (179 aa).

Belongs to the universal ribosomal protein uL6 family. As to quaternary structure, part of the 50S ribosomal subunit.

Its function is as follows. This protein binds to the 23S rRNA, and is important in its secondary structure. It is located near the subunit interface in the base of the L7/L12 stalk, and near the tRNA binding site of the peptidyltransferase center. The polypeptide is Large ribosomal subunit protein uL6 (Nocardioides sp. (strain ATCC BAA-499 / JS614)).